Reading from the N-terminus, the 54-residue chain is Large ribosomal subunit protein bL33C (54 aa).

This sequence belongs to the bacterial ribosomal protein bL33 family.

The polypeptide is Large ribosomal subunit protein bL33C (Streptomyces griseus subsp. griseus (strain JCM 4626 / CBS 651.72 / NBRC 13350 / KCC S-0626 / ISP 5235)).